Consider the following 867-residue polypeptide: FO synthase (867 aa).

The tract at residues 1-22 (MTTSATSGTGPADPAGPTENSM) is disordered. Radical SAM core domains follow at residues 75 to 325 (ITYS…LQAP) and 534 to 769 (VTYI…LLHP). The interval 76 to 407 (TYSKSVFVPL…PRLRPHVAAL (332 aa)) is cofG-like. [4Fe-4S] cluster-binding residues include C89, C93, C96, C548, C552, and C555. Residues 511 to 844 (EGPALDALCG…KPRTTLYGPV (334 aa)) are cofH-like. The interval 835 to 867 (KPRTTLYGPVPEERQRAARDSDGHLPELLPVLD) is disordered. Residues 845-859 (PEERQRAARDSDGHL) are compositionally biased toward basic and acidic residues.

It in the N-terminal section; belongs to the radical SAM superfamily. CofG family. In the C-terminal section; belongs to the radical SAM superfamily. CofH family. Requires [4Fe-4S] cluster as cofactor.

The enzyme catalyses 5-amino-6-(D-ribitylamino)uracil + L-tyrosine + S-adenosyl-L-methionine = 5-amino-5-(4-hydroxybenzyl)-6-(D-ribitylimino)-5,6-dihydrouracil + 2-iminoacetate + 5'-deoxyadenosine + L-methionine + H(+). The catalysed reaction is 5-amino-5-(4-hydroxybenzyl)-6-(D-ribitylimino)-5,6-dihydrouracil + S-adenosyl-L-methionine = 7,8-didemethyl-8-hydroxy-5-deazariboflavin + 5'-deoxyadenosine + L-methionine + NH4(+) + H(+). Its pathway is cofactor biosynthesis; coenzyme F0 biosynthesis. Functionally, catalyzes the radical-mediated synthesis of 7,8-didemethyl-8-hydroxy-5-deazariboflavin (FO) from 5-amino-6-(D-ribitylamino)uracil and L-tyrosine. The protein is FO synthase (fbiC) of Streptomyces coelicolor (strain ATCC BAA-471 / A3(2) / M145).